The primary structure comprises 339 residues: MVREEIAVATGAPRWKCVESRIDSKRLYYSRFILSPLMKGQADMIGIAMRRALLGEIEGTCITRVKSEKVPHEFSTIVGIEESVHEIVMNLKEIVLRSNLYGTLDASICIRGPRYVTAQDIILPPSVEIVDATQHIANLTERVDLCIKLQIERDRGYSMKTPHNDEDGSYPIDAIFMPVRNANHSVHSYGNGNEKQEILFIEIWTNGSLTPKEALYEASRNLIDLFIPFLHAEEREIHLEDNANGVPLALFTFHDEFAITNIRKNKKKMALKSIFIDQSELPSKTYNCLKKSNIHTLLDLLNNSQEDLLKIEHFCMEDVKRILDILQKHFGFDLPKNGK.

Residues 1 to 233 (MVREEIAVAT…DLFIPFLHAE (233 aa)) form an alpha N-terminal domain (alpha-NTD) region. An alpha C-terminal domain (alpha-CTD) region spans residues 267–339 (KKMALKSIFI…FGFDLPKNGK (73 aa)).

The protein belongs to the RNA polymerase alpha chain family. In plastids the minimal PEP RNA polymerase catalytic core is composed of four subunits: alpha, beta, beta', and beta''. When a (nuclear-encoded) sigma factor is associated with the core the holoenzyme is formed, which can initiate transcription.

It localises to the plastid. Its subcellular location is the chloroplast. It catalyses the reaction RNA(n) + a ribonucleoside 5'-triphosphate = RNA(n+1) + diphosphate. DNA-dependent RNA polymerase catalyzes the transcription of DNA into RNA using the four ribonucleoside triphosphates as substrates. The polypeptide is DNA-directed RNA polymerase subunit alpha (Piper cenocladum (Ant piper)).